Here is a 264-residue protein sequence, read N- to C-terminus: Indole-3-glycerol phosphate synthase (264 aa).

Belongs to the TrpC family.

It catalyses the reaction 1-(2-carboxyphenylamino)-1-deoxy-D-ribulose 5-phosphate + H(+) = (1S,2R)-1-C-(indol-3-yl)glycerol 3-phosphate + CO2 + H2O. It functions in the pathway amino-acid biosynthesis; L-tryptophan biosynthesis; L-tryptophan from chorismate: step 4/5. The chain is Indole-3-glycerol phosphate synthase from Azoarcus sp. (strain BH72).